A 1138-amino-acid chain; its full sequence is Solute carrier family 12 member 5 (1138 aa).

Disordered regions lie at residues 1-62 (MSRR…KGRE) and 96-116 (QGSR…KPVQ). Residues 1-98 (MSRRFTVTSL…ANYTNLPQGS (98 aa)) lie on the Cytoplasmic side of the membrane. Residues 21–45 (PESRRHSVADPRRLPREDVKGDGNP) show a composition bias toward basic and acidic residues. Over residues 46–55 (KESSPFINST) the composition is skewed to polar residues. A Phosphothreonine modification is found at Thr57. Residues 98 to 111 (SREHEEAENNEGGK) show a composition bias toward basic and acidic residues. A discontinuously helical transmembrane segment spans residues 99–120 (REHEEAENNEGGKKKPVQAPRM). Lys113 is a binding site for K(+). Topologically, residues 121-129 (GTFMGVYLP) are extracellular. The chain crosses the membrane as a helical span at residues 130–151 (CLQNIFGVILFLRLTWVVGIAG). The Cytoplasmic segment spans residues 152–174 (IMESFCMVFICCSCTMLTAISMS). A helical membrane pass occupies residues 175–203 (AIATNGVVPAGGSYYMISRSLGPEFGGAV). Ala184 is a chloride binding site. At 204 to 229 (GLCFYLGTTFAGAMYILGTIEILLAY) the chain is on the extracellular side. Helical transmembrane passes span 230 to 250 (LFPA…AAML) and 251 to 276 (NNMR…KYVN). Residues 277-402 (KFALVFLGCV…ERRGMPSVGL (126 aa)) are Extracellular-facing. Cys310 and Cys325 are oxidised to a cystine. N-linked (GlcNAc...) asparagine glycosylation is found at Asn314, Asn333, Asn351, and Asn362. Cys345 and Cys354 form a disulfide bridge. Residues 403 to 420 (ADGTPVDMDHPYVFSDMT) form a helical membrane-spanning segment. A K(+)-binding site is contributed by Met410. Tyr414 and Val415 together coordinate chloride. Over 421–429 (SYFTLLVGI) the chain is Cytoplasmic. Residues 430–453 (YFPSVTGIMAGSNRSGDLRDAQKS) traverse the membrane as a helical segment. Asp446 contributes to the K(+) binding site. At 454-485 (IPTGTILAIATTSAVYISSVVLFGACIEGVVL) the chain is on the extracellular side. A helical membrane pass occupies residues 486-513 (RDKFGEAVNGNLVVGTLAWPSPWVIVIG). Topologically, residues 514–534 (SFFSTCGAGLQSLTGAPRLLQ) are cytoplasmic. The next 2 helical transmembrane spans lie at 535-555 (AISR…KANG) and 556-578 (EPTW…ASLD). Glu569 is a binding site for chloride. The Cytoplasmic portion of the chain corresponds to 579-592 (EVAPILSMFFLMCY). 2 helical membrane-spanning segments follow: residues 593–615 (MFVN…PRFR) and 616–632 (YYHW…CLAL). Topologically, residues 633–1138 (MFICSWYYAL…GGREVITIYS (506 aa)) are cytoplasmic. Residues 667–681 (GIRGLSLSAARYALL) form a scissor helix region. A Phosphothreonine; by OXSR1 and STK39 modification is found at Thr929. The segment at 943–1051 (HLTKNERERE…GPSPVSSEGI (109 aa)) is disordered. Over residues 945 to 962 (TKNEREREIQSITDESRG) the composition is skewed to basic and acidic residues. Residues 982-994 (TACDNEEKPEEEV) show a composition bias toward acidic residues. Residues 1001–1012 (SAPSCPSSSPSP) are compositionally biased toward low complexity. Positions 1019-1041 (ERETDPEVHLTWTKDKSVAEKNK) are enriched in basic and acidic residues. Thr1029 bears the Phosphothreonine; by OXSR1 and STK39 mark. Phosphoserine is present on residues Ser1044, Ser1047, and Ser1048.

It belongs to the SLC12A transporter family. K/Cl co-transporter subfamily. As to quaternary structure, homodimer; adopts a domain-swap conformation at the scissor helices connecting the transmembrane domain and C-terminal domain. Heterodimer with K-Cl cotransporters SLC12A6 and SLC12A7. Interacts with AP2A1. Post-translationally, phosphorylated at Thr-929 and Thr-1029 by OXSR1/OSR1 and STK39/SPAK downstream of WNK kinases (WNK1, WNK2, WNK3 or WNK4), inhibiting the potassium-chloride cotransport activity. In terms of tissue distribution, expressed in brainstem, spinal cord and olfactory bulb of 17 dpc embryos. Expressed in all parts of the brain and spinal cord in postnatal day 14 mice. Expressed in brainstem and spinal cord of 17 dpc embryos. Expressed in all parts of the brain and spinal cord in postnatal day 14 mice.

The protein resides in the cell membrane. Its subcellular location is the cell projection. It localises to the dendrite. The enzyme catalyses K(+)(in) + chloride(in) = K(+)(out) + chloride(out). With respect to regulation, inhibited following phosphorylation by OXSR1/OSR1 and STK39/SPAK: phosphorylation takes place downstream of WNK kinases (WNK1, WNK2, WNK3 or WNK4) in response to hyperosmotic stress and subsequent cell shrinkage. Functionally, mediates electroneutral potassium-chloride cotransport in mature neurons and is required for neuronal Cl(-) homeostasis. As major extruder of intracellular chloride, it establishes the low neuronal Cl(-) levels required for chloride influx after binding of GABA-A and glycine to their receptors, with subsequent hyperpolarization and neuronal inhibition. Involved in the regulation of dendritic spine formation and maturation. The protein is Solute carrier family 12 member 5 (Slc12a5) of Mus musculus (Mouse).